The primary structure comprises 843 residues: Eisosome protein 1 (843 aa).

The disordered stretch occupies residues 1–54; it reads MSLISAVEDRDIHNIGKTSGGGSRTSSINSSKKSLKHGSKSLRKPKVYQTTGEP. S2 carries the post-translational modification N-acetylserine. Position 2 is a phosphoserine (S2). The segment covering 33–46 has biased composition (basic residues); it reads KSLKHGSKSLRKPK. Phosphoserine is present on residues S88 and S130. Positions 120–176 are disordered; that stretch reads KMGPKVVRNNSITSATSKTSKESQTKRKSKESPGAAASKAYSMTMETTSLSSQTNSR. Composition is skewed to polar residues over residues 127-137 and 163-176; these read RNNSITSATSK and TMETTSLSSQTNSR. 4 positions are modified to phosphoserine: S182, S401, S584, and S710. The interval 717 to 843 is disordered; that stretch reads DLPTQLEKIE…QDAISNQEKK (127 aa). The residue at position 720 (T720) is a Phosphothreonine. Residues 752 to 764 are compositionally biased toward low complexity; it reads STAAKEATETSSA. A phosphoserine mark is found at S763 and S775. Residues 781–797 show a composition bias toward basic and acidic residues; sequence SGKEDANDCKSAEHSKE. The segment covering 798 to 810 has biased composition (polar residues); sequence ISVSQKAGNNKSL. S816, S828, S829, and S838 each carry phosphoserine.

Belongs to the EIS1 family.

The protein localises to the cytoplasmic granule. The protein resides in the cell membrane. Required for normal formation of eisosomes, large cytoplasmic protein assemblies that localize to specialized domains on plasma membrane and mark the site of endocytosis. The protein is Eisosome protein 1 (EIS1) of Saccharomyces cerevisiae (strain JAY291) (Baker's yeast).